The sequence spans 375 residues: CLIP domain-containing serine protease B14 (375 aa).

An N-terminal signal peptide occupies residues 1–24 (MYSRRYVACGLLCLLVIAIDQGHG). The 55-residue stretch at 29-83 (PCTTPNGTAGRCVRVRECGYVLDLLRKDLFAHSDTVHLEGLQCGTRPDGGALVCC) folds into the Clip domain. Disulfide bonds link Cys-30-Cys-82, Cys-40-Cys-71, and Cys-46-Cys-83. N-linked (GlcNAc...) asparagine glycosylation is present at Asn-34. Residues 101–370 (IIGGNDTELG…YMGWLEREMF (270 aa)) form the Peptidase S1 domain. The N-linked (GlcNAc...) asparagine glycan is linked to Asn-105. A disulfide bridge links Cys-131 with Cys-147. Residues His-146 and Asp-213 each act as charge relay system in the active site. A glycan (N-linked (GlcNAc...) asparagine) is linked at Asn-238. 2 cysteine pairs are disulfide-bonded: Cys-289–Cys-307 and Cys-317–Cys-346. Catalysis depends on Ser-321, which acts as the Charge relay system. Asn-357 is a glycosylation site (N-linked (GlcNAc...) asparagine).

This sequence belongs to the peptidase S1 family. CLIP subfamily. Post-translationally, N-glycosylated. In terms of processing, proteolytically cleaved. In terms of tissue distribution, expressed by a subpopulation of hemocytes.

It localises to the secreted. Its function is as follows. Serine protease. Plays a role in innate immunity against infections by parasite P.berghei and by Gram-negative bacteria such as E.coli. In response to P.berghei infection, contributes to the clearing of parasite ookinetes independent of melanization, an innate immune response which consists in the deposition of melanin pigments on invading pathogens and parasites. May play a role in non-septic wound healing. This chain is CLIP domain-containing serine protease B14, found in Anopheles gambiae (African malaria mosquito).